We begin with the raw amino-acid sequence, 395 residues long: NAD(P)H-quinone oxidoreductase subunit H (395 aa).

It belongs to the complex I 49 kDa subunit family. In terms of assembly, NDH-1 can be composed of about 15 different subunits; different subcomplexes with different compositions have been identified which probably have different functions.

It is found in the cellular thylakoid membrane. It catalyses the reaction a plastoquinone + NADH + (n+1) H(+)(in) = a plastoquinol + NAD(+) + n H(+)(out). The catalysed reaction is a plastoquinone + NADPH + (n+1) H(+)(in) = a plastoquinol + NADP(+) + n H(+)(out). Its function is as follows. NDH-1 shuttles electrons from an unknown electron donor, via FMN and iron-sulfur (Fe-S) centers, to quinones in the respiratory and/or the photosynthetic chain. The immediate electron acceptor for the enzyme in this species is believed to be plastoquinone. Couples the redox reaction to proton translocation, and thus conserves the redox energy in a proton gradient. Cyanobacterial NDH-1 also plays a role in inorganic carbon-concentration. In Prochlorococcus marinus subsp. pastoris (strain CCMP1986 / NIES-2087 / MED4), this protein is NAD(P)H-quinone oxidoreductase subunit H.